The sequence spans 357 residues: Arginine kinase (357 aa).

A Phosphagen kinase N-terminal domain is found at 9 to 91 (KLEAGFKKLQ…FNPIIEDYHE (83 aa)). 64–66 (GVG) contributes to the L-arginine binding site. In terms of domain architecture, Phosphagen kinase C-terminal spans 119 to 356 (YVVSTHVRCG…LEMIKMEEAA (238 aa)). Residues 122–126 (STHVR) and histidine 185 each bind ATP. L-arginine is bound at residue glutamate 225. Arginine 229 contributes to the ATP binding site. Cysteine 271 provides a ligand contact to L-arginine. ATP is bound by residues 280–284 (RASVH) and 309–314 (RGTRGE).

It belongs to the ATP:guanido phosphotransferase family.

It carries out the reaction L-arginine + ATP = N(omega)-phospho-L-arginine + ADP + H(+). Catalyzes the reversible transfer of high energy ATP gamma-phosphate group to L-arginine. The polypeptide is Arginine kinase (Polybetes pythagoricus (South American huntsman spider)).